Here is a 1380-residue protein sequence, read N- to C-terminus: Protein TORNADO 1 (1380 aa).

10 LRR repeats span residues 26–46, 47–70, 105–132, 161–184, 266–289, 299–322, 323–346, 348–371, 446–472, and 476–502; these read FFNLQTLSFSSSGNTTHCQLI, TESSMNINVTRDNLTSLSQIFIEL, TSKIKQLAFRKNRFSEQCLNELSEILKR, NDSLEELQIWEDSIGSKGAEELSR, NTTVRSLDMTGAKLNSRWAKEFRW, EVKLSKTGLKDKAVVYIAAGLFKN, KSLQSLYVDGNRFGSVGVEDLLCP, SRFSALQLQANITLRSIVFGGSNT, INPLIEEIDLARTPLQDSGKADEIYQK, and NGRKIDEAETDDSLKDMPLTEPKSVRA. The region spanning 493-702 is the Roc domain; the sequence is PLTEPKSVRA…HHIRMTSKAI (210 aa). GTP-binding positions include 506–513 and 567–571; these read GQNYAGKT and NLAGQ. The helical transmembrane segment at 574 to 594 threads the bilayer; that stretch reads FFALHDLMFPSPCFFLIVLSL. LRR repeat units follow at residues 640–665, 688–712, 799–826, 1023–1046, 1131–1154, and 1229–1254; these read LTHSEKINLQSESFQATVGCIQRLRD, VSKLTHHIRMTSKAILQRVPRVYQL, LTQLIKLDVRKQSTGERNGFVSRKELEK, QSQFVSLHRLKEALSSVPAETMYD, EAVLQRLKIIEQEIRDLKQEIQGL, and QLGCDVMQIDNQAVKCLAPYMTNFMK. Residue 641–644 participates in GTP binding; that stretch reads THSE. A COR domain is found at 757 to 931; sequence NIQIVETRRH…LQVHLHNRIM (175 aa). The next 2 membrane-spanning stretches (helical) occupy residues 1255 to 1275 and 1287 to 1307; these read LVTFALRIGANWAAGMGHMIP and PAVMTGAAGAAGAIGVAAALG.

In terms of tissue distribution, expressed in seedlings, roots, leaves, stems and flowers. Present in ovules, prominently in nucellus and integuments.

The protein resides in the membrane. Involved in the basipetal transport of auxin (IAA) that modulates growth and organs organization. Required for initial divisions in the epidermal/lateral root cap leading to the formation of epidermal cells and a clone of lateral root cap cells, as well as for the maintenance of the radial pattern of cell specification in the root, thus regulating the distinction between the lateral root cap and epidermis. The protein is Protein TORNADO 1 (TRN1) of Arabidopsis thaliana (Mouse-ear cress).